Consider the following 223-residue polypeptide: GTP cyclohydrolase 1 (223 aa).

Residues C114, H117, and C185 each coordinate Zn(2+).

Belongs to the GTP cyclohydrolase I family. As to quaternary structure, homomer.

It catalyses the reaction GTP + H2O = 7,8-dihydroneopterin 3'-triphosphate + formate + H(+). It participates in cofactor biosynthesis; 7,8-dihydroneopterin triphosphate biosynthesis; 7,8-dihydroneopterin triphosphate from GTP: step 1/1. In Chlorobium chlorochromatii (strain CaD3), this protein is GTP cyclohydrolase 1.